A 197-amino-acid chain; its full sequence is Large ribosomal subunit protein uL22 (197 aa).

A disordered region spans residues 118–197 (ESRPAKDQRS…ETSAAKGGSD (80 aa)). The span at 149 to 165 (APAKKAAAKAPAKKAPA) shows a compositional bias: low complexity. Positions 172 to 183 (TPAKKAPAKKAP) are enriched in basic residues. The segment covering 184-197 (AKASETSAAKGGSD) has biased composition (low complexity).

The protein belongs to the universal ribosomal protein uL22 family. As to quaternary structure, part of the 50S ribosomal subunit.

Functionally, this protein binds specifically to 23S rRNA; its binding is stimulated by other ribosomal proteins, e.g. L4, L17, and L20. It is important during the early stages of 50S assembly. It makes multiple contacts with different domains of the 23S rRNA in the assembled 50S subunit and ribosome. The globular domain of the protein is located near the polypeptide exit tunnel on the outside of the subunit, while an extended beta-hairpin is found that lines the wall of the exit tunnel in the center of the 70S ribosome. The chain is Large ribosomal subunit protein uL22 from Mycobacterium bovis (strain ATCC BAA-935 / AF2122/97).